The following is a 99-amino-acid chain: uncharacterized protein (99 aa).

The helical transmembrane segment at 6 to 26 (LVCSIVFILFILFYDLKIGTI) threads the bilayer. The 48-residue stretch at 48–95 (KTVKVKPGDTVMSIVGSAGSPDDIVKDFEALNPNVKANAIQAGTAYKF) folds into the LysM domain.

It is found in the secreted. It localises to the cell wall. The protein resides in the membrane. This is an uncharacterized protein from Bacillus subtilis (strain 168).